Consider the following 96-residue polypeptide: MSAVLSTENGLILKLYIQPKASRDQIVGLHGDELKVAITAPPVDGQANAHLVKFIAKQFRVAKSQVIIEKGELGRHKQIKVINPQQIPPEVTILLE.

The protein belongs to the UPF0235 family.

The protein is UPF0235 protein YPK_0828 of Yersinia pseudotuberculosis serotype O:3 (strain YPIII).